The primary structure comprises 284 residues: Small ribosomal subunit protein uS5y/uS5u/uS5v (284 aa).

The span at 1–19 (MAERGGESGAERGGDRGDF) shows a compositional bias: basic and acidic residues. The interval 1-51 (MAERGGESGAERGGDRGDFGRGFGGGRGGGRGRDRGPRGRGRRGGRASEET) is disordered. Over residues 20 to 29 (GRGFGGGRGG) the composition is skewed to gly residues. The S5 DRBM domain occupies 95–158 (LKDEVMKIMP…ILAKLSVVPV (64 aa)).

Belongs to the universal ribosomal protein uS5 family.

This Arabidopsis thaliana (Mouse-ear cress) protein is Small ribosomal subunit protein uS5y/uS5u/uS5v (RPS2B).